Consider the following 812-residue polypeptide: Outer membrane usher protein FaeD (812 aa).

The first 35 residues, 1–35 (MKKYVTTKSVQPVAFRLTTLSLVMSAVLGSASVIA), serve as a signal peptide directing secretion. Cysteine 793 and cysteine 811 are joined by a disulfide.

Belongs to the fimbrial export usher family.

It is found in the cell outer membrane. Functionally, involved in the export and assembly of K88ab fimbrial subunits across the outer membrane. This is Outer membrane usher protein FaeD (faeD) from Escherichia coli.